The chain runs to 259 residues: uncharacterized protein (259 aa).

The protein to M.thermoautotrophicum MTH738.

This is an uncharacterized protein from Methanocaldococcus jannaschii (strain ATCC 43067 / DSM 2661 / JAL-1 / JCM 10045 / NBRC 100440) (Methanococcus jannaschii).